The sequence spans 283 residues: MHCHAELRLSSPGQLKAARRRYKTFMIDEILSKETCDYFEKLSLYSVCPSLVVRPKPLHSCTGSPSLRAYPLLSVITRQPTVISHLVPTGSGLTPVLTRHPVAAAEAAAAAAETPGGEALASSESETEQPTPRQKKPRRSRTIFTELQLMGLEKKFQKQKYLSTPDRLDLAQSLGLTQLQVKTWYQNRRMKWKKMVLKGGQEAPTKPKGRPKKNSIPTSEEIEAEEKMNSQAQSQELLESSERQEEPCDTQEPKACLVPLEVAEPIHQPQELSEASSEPPPLS.

Disordered regions lie at residues 107–141 (AAAA…RRSR) and 198–283 (KGGQ…PPLS). Over residues 122 to 132 (SSESETEQPTP) the composition is skewed to polar residues. Residues 139–198 (RSRTIFTELQLMGLEKKFQKQKYLSTPDRLDLAQSLGLTQLQVKTWYQNRRMKWKKMVLK) constitute a DNA-binding region (homeobox). Positions 268 to 277 (QPQELSEASS) are enriched in low complexity.

The protein belongs to the BAR homeobox family. As to expression, nervous system, particularly in the telencephalon, spinal cord, and dorsal root ganglia.

The protein localises to the nucleus. Its function is as follows. Transcription factor. Binds optimally to the DNA consensus sequence 5'-YYTAATGRTTTTY-3'. May control the expression of neural adhesion molecules such as L1 or Ng-CAM during embryonic development of both the central and peripherical nervous system. May be involved in controlling adhesive processes in keratinizing epithelia. The sequence is that of Homeobox protein BarH-like 2 (Barx2) from Mus musculus (Mouse).